Reading from the N-terminus, the 394-residue chain is Putative 8-amino-7-oxononanoate synthase (394 aa).

Arg-23 serves as a coordination point for substrate. Residue 110 to 111 coordinates pyridoxal 5'-phosphate; the sequence is GY. His-135 contacts substrate. Pyridoxal 5'-phosphate is bound by residues Ser-182, 207 to 210, and 238 to 241; these read DEAH and TFSK. Lys-241 is subject to N6-(pyridoxal phosphate)lysine. Thr-355 is a substrate binding site.

This sequence belongs to the class-II pyridoxal-phosphate-dependent aminotransferase family. BioF subfamily. In terms of assembly, homodimer. It depends on pyridoxal 5'-phosphate as a cofactor.

The enzyme catalyses 6-carboxyhexanoyl-[ACP] + L-alanine + H(+) = (8S)-8-amino-7-oxononanoate + holo-[ACP] + CO2. The protein operates within cofactor biosynthesis; biotin biosynthesis. Its function is as follows. Catalyzes the decarboxylative condensation of pimeloyl-[acyl-carrier protein] and L-alanine to produce 8-amino-7-oxononanoate (AON), [acyl-carrier protein], and carbon dioxide. This Bacillus cereus (strain Q1) protein is Putative 8-amino-7-oxononanoate synthase (bioF).